A 319-amino-acid chain; its full sequence is ATP-dependent 6-phosphofructokinase (319 aa).

Position 11 (Gly-11) interacts with ATP. 21-25 is a binding site for ADP; the sequence is RAVVR. ATP-binding positions include 72–73 and 102–105; these read RS and GDGS. Asp-103 contacts Mg(2+). 125–127 is a substrate binding site; that stretch reads TID. Asp-127 serves as the catalytic Proton acceptor. Arg-154 is a binding site for ADP. Residues Arg-162 and 169 to 171 contribute to the substrate site; that span reads MGR. ADP is bound by residues 185-187 and 213-215; these read GAE and KMH. Substrate-binding positions include Glu-222, Arg-243, and 249-252; that span reads HIQR.

Belongs to the phosphofructokinase type A (PFKA) family. ATP-dependent PFK group I subfamily. Prokaryotic clade 'B1' sub-subfamily. In terms of assembly, homotetramer. Mg(2+) serves as cofactor.

It is found in the cytoplasm. It catalyses the reaction beta-D-fructose 6-phosphate + ATP = beta-D-fructose 1,6-bisphosphate + ADP + H(+). The protein operates within carbohydrate degradation; glycolysis; D-glyceraldehyde 3-phosphate and glycerone phosphate from D-glucose: step 3/4. With respect to regulation, allosterically activated by ADP and other diphosphonucleosides, and allosterically inhibited by phosphoenolpyruvate. In terms of biological role, catalyzes the phosphorylation of D-fructose 6-phosphate to fructose 1,6-bisphosphate by ATP, the first committing step of glycolysis. In Clostridium tetani (strain Massachusetts / E88), this protein is ATP-dependent 6-phosphofructokinase.